A 522-amino-acid chain; its full sequence is ATP synthase subunit alpha, mitochondrial (522 aa).

172–179 (GDRQTGKT) contacts ATP.

Belongs to the ATPase alpha/beta chains family. F-type ATPases have 2 components, CF(1) - the catalytic core - and CF(0) - the membrane proton channel. CF(1) has five subunits: alpha(3), beta(3), gamma(1), delta(1), epsilon(1). CF(0) has three main subunits: a, b and c.

The protein localises to the mitochondrion. It localises to the mitochondrion inner membrane. Its function is as follows. Mitochondrial membrane ATP synthase (F(1)F(0) ATP synthase or Complex V) produces ATP from ADP in the presence of a proton gradient across the membrane which is generated by electron transport complexes of the respiratory chain. F-type ATPases consist of two structural domains, F(1) - containing the extramembraneous catalytic core, and F(0) - containing the membrane proton channel, linked together by a central stalk and a peripheral stalk. During catalysis, ATP synthesis in the catalytic domain of F(1) is coupled via a rotary mechanism of the central stalk subunits to proton translocation. Subunits alpha and beta form the catalytic core in F(1). Rotation of the central stalk against the surrounding alpha(3)beta(3) subunits leads to hydrolysis of ATP in three separate catalytic sites on the beta subunits. Subunit alpha does not bear the catalytic high-affinity ATP-binding sites. The chain is ATP synthase subunit alpha, mitochondrial (ATP1) from Acanthamoeba castellanii (Amoeba).